Consider the following 207-residue polypeptide: 2,3-bisphosphoglycerate-dependent phosphoglycerate mutase (207 aa).

Residues 10-17 (RHGQSEWN), 23-24 (TG), arginine 62, 89-92 (ERDY), lysine 100, 116-117 (RR), and 160-161 (GN) contribute to the substrate site. Residue histidine 11 is the Tele-phosphohistidine intermediate of the active site. Catalysis depends on glutamate 89, which acts as the Proton donor/acceptor.

This sequence belongs to the phosphoglycerate mutase family. BPG-dependent PGAM subfamily. As to quaternary structure, homodimer.

The catalysed reaction is (2R)-2-phosphoglycerate = (2R)-3-phosphoglycerate. It functions in the pathway carbohydrate degradation; glycolysis; pyruvate from D-glyceraldehyde 3-phosphate: step 3/5. In terms of biological role, catalyzes the interconversion of 2-phosphoglycerate and 3-phosphoglycerate. This is 2,3-bisphosphoglycerate-dependent phosphoglycerate mutase from Bradyrhizobium sp. (strain ORS 278).